We begin with the raw amino-acid sequence, 337 residues long: GTPase Obg (337 aa).

Residues 1-159 (MKFVDSASIF…LMLNMELKLM (159 aa)) enclose the Obg domain. The region spanning 160–323 (ADVGLVGFPN…LKDELWREVS (164 aa)) is the OBG-type G domain. GTP contacts are provided by residues 166–173 (GFPNAGKS), 191–195 (FTTLV), 213–216 (DIPG), 280–283 (TKMD), and 304–306 (SAV). 2 residues coordinate Mg(2+): serine 173 and threonine 193.

Belongs to the TRAFAC class OBG-HflX-like GTPase superfamily. OBG GTPase family. In terms of assembly, monomer. The cofactor is Mg(2+).

The protein resides in the cytoplasm. An essential GTPase which binds GTP, GDP and possibly (p)ppGpp with moderate affinity, with high nucleotide exchange rates and a fairly low GTP hydrolysis rate. Plays a role in control of the cell cycle, stress response, ribosome biogenesis and in those bacteria that undergo differentiation, in morphogenesis control. The protein is GTPase Obg of Pelodictyon phaeoclathratiforme (strain DSM 5477 / BU-1).